We begin with the raw amino-acid sequence, 513 residues long: Putative ribose/galactose/methyl galactoside import ATP-binding protein (513 aa).

ABC transporter domains follow at residues 24–260 (LSAE…VGRE) and 270–510 (VPIG…VMEL). Residue 56 to 63 (GENGAGKS) participates in ATP binding.

The protein belongs to the ABC transporter superfamily. Carbohydrate importer 2 (CUT2) (TC 3.A.1.2) family.

It localises to the cell inner membrane. It carries out the reaction D-ribose(out) + ATP + H2O = D-ribose(in) + ADP + phosphate + H(+). It catalyses the reaction D-galactose(out) + ATP + H2O = D-galactose(in) + ADP + phosphate + H(+). Functionally, part of an ABC transporter complex involved in carbohydrate import. Could be involved in ribose, galactose and/or methyl galactoside import. Responsible for energy coupling to the transport system. In Rhizobium johnstonii (strain DSM 114642 / LMG 32736 / 3841) (Rhizobium leguminosarum bv. viciae), this protein is Putative ribose/galactose/methyl galactoside import ATP-binding protein.